The chain runs to 415 residues: Multifunctional CCA protein (415 aa).

ATP-binding residues include G8 and R11. CTP-binding residues include G8 and R11. D21 and D23 together coordinate Mg(2+). ATP is bound by residues R91, R143, and R146. Residues R91, R143, and R146 each coordinate CTP. Positions 232-333 (TGVHVMMVID…VRLLERCDAL (102 aa)) constitute an HD domain.

The protein belongs to the tRNA nucleotidyltransferase/poly(A) polymerase family. Bacterial CCA-adding enzyme type 1 subfamily. Monomer. Can also form homodimers and oligomers. It depends on Mg(2+) as a cofactor. Ni(2+) serves as cofactor.

The enzyme catalyses a tRNA precursor + 2 CTP + ATP = a tRNA with a 3' CCA end + 3 diphosphate. The catalysed reaction is a tRNA with a 3' CCA end + 2 CTP + ATP = a tRNA with a 3' CCACCA end + 3 diphosphate. In terms of biological role, catalyzes the addition and repair of the essential 3'-terminal CCA sequence in tRNAs without using a nucleic acid template. Adds these three nucleotides in the order of C, C, and A to the tRNA nucleotide-73, using CTP and ATP as substrates and producing inorganic pyrophosphate. tRNA 3'-terminal CCA addition is required both for tRNA processing and repair. Also involved in tRNA surveillance by mediating tandem CCA addition to generate a CCACCA at the 3' terminus of unstable tRNAs. While stable tRNAs receive only 3'-terminal CCA, unstable tRNAs are marked with CCACCA and rapidly degraded. This is Multifunctional CCA protein from Cupriavidus taiwanensis (strain DSM 17343 / BCRC 17206 / CCUG 44338 / CIP 107171 / LMG 19424 / R1) (Ralstonia taiwanensis (strain LMG 19424)).